Here is a 60-residue protein sequence, read N- to C-terminus: Large ribosomal subunit protein bL32 (60 aa).

A disordered region spans residues 1 to 43 (MAVQQNKKSPSKRGMHRSHDALTNPPLAIEPTTGEIHLRHHIS).

The protein belongs to the bacterial ribosomal protein bL32 family.

In Nitrosomonas europaea (strain ATCC 19718 / CIP 103999 / KCTC 2705 / NBRC 14298), this protein is Large ribosomal subunit protein bL32.